Here is a 666-residue protein sequence, read N- to C-terminus: Tripartite terminase subunit 3 (666 aa).

The Walker A motif motif lies at 208-215; it reads VPRRHGKT. Positions 300 to 305 match the Walker B motif motif; that stretch reads LLIVDE. Residue Glu-305 is the For ATPase activity of the active site. Residues Asp-458, Glu-529, and Asp-643 each act as for nuclease activity in the active site.

The protein belongs to the herpesviridae TRM3 protein family. As to quaternary structure, interacts with the terminase subunits TRM1 and TRM2. Interacts with portal protein.

It localises to the host nucleus. Component of the molecular motor that translocates viral genomic DNA in empty capsid during DNA packaging. Forms a tripartite terminase complex together with TRM1 and TRM2 in the host cytoplasm. Once the complex reaches the host nucleus, it interacts with the capsid portal vertex. This portal forms a ring in which genomic DNA is translocated into the capsid. TRM3 carries an RNase H-like nuclease activity that plays an important role for the cleavage of concatemeric viral DNA into unit length genomes. The polypeptide is Tripartite terminase subunit 3 (Homo sapiens (Human)).